Reading from the N-terminus, the 204-residue chain is Tumor protein D53 (204 aa).

The segment at 1 to 20 (MEAQAQGLLETEPLQGTDED) is disordered. The stretch at 22–73 (VASADFSSMLSEEEKEELKAELVQLEDEITTLRQVLSAKERHLVEIKQKLGM) forms a coiled coil. 4 positions are modified to phosphoserine: serine 29, serine 86, serine 122, and serine 131. Arginine 133 is modified (omega-N-methylarginine). Threonine 146 is subject to Phosphothreonine. Serine 149 and serine 174 each carry phosphoserine.

Belongs to the TPD52 family. Forms a homodimer or heterodimer with other members of the family.

This chain is Tumor protein D53 (TPD52L1), found in Homo sapiens (Human).